We begin with the raw amino-acid sequence, 187 residues long: Small ribosomal subunit protein uS5 (187 aa).

The segment at Met1–Pro20 is disordered. The S5 DRBM domain maps to Phe22–Val85.

Belongs to the universal ribosomal protein uS5 family. As to quaternary structure, part of the 30S ribosomal subunit. Contacts proteins S4 and S8.

Its function is as follows. With S4 and S12 plays an important role in translational accuracy. Located at the back of the 30S subunit body where it stabilizes the conformation of the head with respect to the body. In Cereibacter sphaeroides (strain ATCC 17029 / ATH 2.4.9) (Rhodobacter sphaeroides), this protein is Small ribosomal subunit protein uS5.